The sequence spans 171 residues: Tetratricopeptide repeat protein 9C (171 aa).

TPR repeat units follow at residues 8–41 (AQLYKEKGNQCYREGKYRDAVSGYHRALLQLRGL), 72–107 (TDCYNNLAACLLQMEPVNYERVKEYSQKVLERQPDN), and 108–141 (AKALYRAGVAFFHLQDYDQARHYLMAAVNRKPKD).

It belongs to the TTC9 family.

This Bos taurus (Bovine) protein is Tetratricopeptide repeat protein 9C (TTC9C).